The following is a 98-amino-acid chain: Defensin-B (98 aa).

A signal peptide spans 1–20 (MKSITVICFLALCTVAITSA). The propeptide occupies 21 to 58 (YPQEPVLADEARPFANSLFDELPEETYQAAVENFRLKR). Intrachain disulfides connect Cys-61–Cys-88, Cys-74–Cys-94, and Cys-78–Cys-96.

It belongs to the invertebrate defensin family. Type 1 subfamily.

The protein localises to the secreted. In terms of biological role, antibacterial peptide mostly active against Gram-positive bacteria. This Aedes aegypti (Yellowfever mosquito) protein is Defensin-B (DEFB).